The chain runs to 138 residues: Transcription antitermination protein NusB (138 aa).

It belongs to the NusB family.

Functionally, involved in transcription antitermination. Required for transcription of ribosomal RNA (rRNA) genes. Binds specifically to the boxA antiterminator sequence of the ribosomal RNA (rrn) operons. This Yersinia pseudotuberculosis serotype O:1b (strain IP 31758) protein is Transcription antitermination protein NusB.